A 355-amino-acid chain; its full sequence is MIPRKRYGSKNTDQGVYLGLSKTQVLSPATAGSSSSDIAPLPPPVTLVPPPPDTMSCRDRTQEFLSACKSLQTRQNGIQTNKPALRAVRQRSEFTLMAKRIGKDLSNTFAKLEKLTILAKRKSLFDDKAVEIEELTYIIKQDINSLNKQIAQLQDFVRAKGSQSGRHLQTHSNTIVVSLQSKLASMSNDFKSVLEVRTENLKQQRSRREQFSRAPVSALPLAPNHLGGGAVVLGAESHASKDVAIDMMDSRTSQQLQLIDEQDSYIQSRADTMQNIESTIVELGSIFQQLAHMVKEQEETIQRIDENVLGAQLDVEAAHSEILKYFQSVTSNRWLMVKIFLILIVFFIIFVVFLA.

Residues 1–333 lie on the Cytoplasmic side of the membrane; sequence MIPRKRYGSK…KYFQSVTSNR (333 aa). Positions 28-37 are enriched in polar residues; it reads PATAGSSSSD. The interval 28 to 51 is disordered; sequence PATAGSSSSDIAPLPPPVTLVPPP. A compositionally biased stretch (pro residues) spans 40 to 51; the sequence is PLPPPVTLVPPP. The short motif at 245–247 is the IxM motif; signal for cargo packaging into COPII-coated vesicles element; the sequence is IDM. The region spanning 263-325 is the t-SNARE coiled-coil homology domain; sequence DSYIQSRADT…EAAHSEILKY (63 aa). Residues 287 to 318 adopt a coiled-coil conformation; the sequence is FQQLAHMVKEQEETIQRIDENVLGAQLDVEAA. Residues 334-354 traverse the membrane as a helical; Anchor for type IV membrane protein segment; the sequence is WLMVKIFLILIVFFIIFVVFL. A topological domain (vesicular) is located at residue Ala-355.

This sequence belongs to the syntaxin family. As to quaternary structure, part of a ternary complex containing STX5A, NSFL1C and VCP. Identified in a unique SNARE complex composed of the Golgi SNAREs GOSR1, GOSR2, YKT6 and VTI1A. Component of a SNARE complex consisting of STX5, YKT6, GOSR1 and BET1L. Interacts with BET1L. Interacts with BET1. Interacts with COG4. Interacts with GM130/GOLGA2. Interacts (via IxM motif) with SEC24C and SEC24D; mediates STX5 packaging into COPII-coated vesicles. Interacts with VLDLR; this interaction mediates VLDLR translocation from the endoplasmic reticulum to the plasma membrane.

It is found in the endoplasmic reticulum-Golgi intermediate compartment membrane. Its subcellular location is the golgi apparatus membrane. In terms of biological role, mediates endoplasmic reticulum to Golgi transport. Together with p115/USO1 and GM130/GOLGA2, involved in vesicle tethering and fusion at the cis-Golgi membrane to maintain the stacked and inter-connected structure of the Golgi apparatus. Functionally, required for Golgi to endoplasmic reticulum retrogade transport, and for intra-Golgi transport. (Microbial infection) Required for the efficient production of infectious virion during human cytomegalovirus infection. Mechanistically, participates in the formation of the cytoplasmic viral assembly compartment where tegument acquisition and envelopment occur. In Homo sapiens (Human), this protein is Syntaxin-5 (STX5).